Reading from the N-terminus, the 192-residue chain is Epididymal-specific lipocalin-12 (192 aa).

Positions 1–19 (MRLLCGLWLWLSLLKVLQA) are cleaved as a signal peptide. Residues cysteine 88 and cysteine 192 are joined by a disulfide bond.

It belongs to the calycin superfamily. Lipocalin family. Monomer.

The protein resides in the secreted. In terms of biological role, binds all-trans retinoic acid and may act as a retinoid carrier protein within the epididymis. May play a role in male fertility. The chain is Epididymal-specific lipocalin-12 (LCN12) from Homo sapiens (Human).